The sequence spans 265 residues: Probable cell division protein kinase ECU08_0230 (265 aa).

Residues 4 to 263 enclose the Protein kinase domain; the sequence is YILGALIGSG…IMEILENEYG (260 aa). ATP-binding positions include 10-18 and Lys-33; that span reads IGSGTYGEV. Asp-121 (proton acceptor) is an active-site residue.

Belongs to the protein kinase superfamily. CMGC Ser/Thr protein kinase family. CDC2/CDKX subfamily.

The protein localises to the nucleus. The catalysed reaction is L-seryl-[protein] + ATP = O-phospho-L-seryl-[protein] + ADP + H(+). It carries out the reaction L-threonyl-[protein] + ATP = O-phospho-L-threonyl-[protein] + ADP + H(+). Functionally, may play a role in the control of the eukaryotic cell cycle. The protein is Probable cell division protein kinase ECU08_0230 of Encephalitozoon cuniculi (strain GB-M1) (Microsporidian parasite).